The sequence spans 319 residues: Protein-methionine-sulfoxide reductase catalytic subunit MsrP (319 aa).

Positions 1 to 54 form a signal peptide, tat-type signal; sequence MSSFKPSRFSTARLTGDAVTPKSIYLRRREFMIGLGAIAATGAASSAFADPLEA. Residues Asn75, 78 to 79, Cys133, Asn218, Arg223, and 234 to 236 contribute to the Mo-molybdopterin site; these read YE and GIK.

This sequence belongs to the MsrP family. As to quaternary structure, heterodimer of a catalytic subunit (MsrP) and a heme-binding subunit (MsrQ). The cofactor is Mo-molybdopterin. Predicted to be exported by the Tat system. The position of the signal peptide cleavage has not been experimentally proven.

Its subcellular location is the periplasm. It carries out the reaction L-methionyl-[protein] + a quinone + H2O = L-methionyl-(S)-S-oxide-[protein] + a quinol. The enzyme catalyses L-methionyl-[protein] + a quinone + H2O = L-methionyl-(R)-S-oxide-[protein] + a quinol. Part of the MsrPQ system that repairs oxidized periplasmic proteins containing methionine sulfoxide residues (Met-O), using respiratory chain electrons. Thus protects these proteins from oxidative-stress damage caused by reactive species of oxygen and chlorine generated by the host defense mechanisms. MsrPQ is essential for the maintenance of envelope integrity under bleach stress, rescuing a wide series of structurally unrelated periplasmic proteins from methionine oxidation. The catalytic subunit MsrP is non-stereospecific, being able to reduce both (R-) and (S-) diastereoisomers of methionine sulfoxide. The chain is Protein-methionine-sulfoxide reductase catalytic subunit MsrP from Brucella melitensis biotype 1 (strain ATCC 23456 / CCUG 17765 / NCTC 10094 / 16M).